The primary structure comprises 115 residues: Large ribosomal subunit protein bL20 (115 aa).

This sequence belongs to the bacterial ribosomal protein bL20 family.

Functionally, binds directly to 23S ribosomal RNA and is necessary for the in vitro assembly process of the 50S ribosomal subunit. It is not involved in the protein synthesizing functions of that subunit. The protein is Large ribosomal subunit protein bL20 of Chlorobium phaeovibrioides (strain DSM 265 / 1930) (Prosthecochloris vibrioformis (strain DSM 265)).